Here is a 257-residue protein sequence, read N- to C-terminus: 1-acyl-sn-glycerol-3-phosphate acyltransferase (257 aa).

The helical transmembrane segment at 10–30 (VLFYLLLSASAFVWGTLSFFI) threads the bilayer. Residues 82–87 (HQSTWE) carry the HXXXXD motif motif. The helical transmembrane segment at 105 to 125 (ELLYVPFFGWALALLKPIAID) threads the bilayer.

It belongs to the 1-acyl-sn-glycerol-3-phosphate acyltransferase family.

It localises to the cell inner membrane. The enzyme catalyses a 1-acyl-sn-glycero-3-phosphate + an acyl-CoA = a 1,2-diacyl-sn-glycero-3-phosphate + CoA. The protein operates within phospholipid metabolism; CDP-diacylglycerol biosynthesis; CDP-diacylglycerol from sn-glycerol 3-phosphate: step 2/3. Its function is as follows. Converts lysophosphatidic acid (LPA) into phosphatidic acid by incorporating acyl moiety at the 2 position. This chain is 1-acyl-sn-glycerol-3-phosphate acyltransferase, found in Pseudomonas aeruginosa (strain ATCC 15692 / DSM 22644 / CIP 104116 / JCM 14847 / LMG 12228 / 1C / PRS 101 / PAO1).